The sequence spans 859 residues: Villin-like protein (859 aa).

6 Gelsolin-like repeats span residues 24-76 (LKML…EARE), 148-188 (VSAT…SEKA), 264-308 (LVVQ…QEKK), 401-450 (LQRQ…EDTK), 521-561 (TRTM…DQRE), and 624-665 (LVLT…WKKE). The HP domain maps to 793-859 (SMVNGSLPRE…QQAKKKLGFF (67 aa)).

Belongs to the villin/gelsolin family.

Its function is as follows. Possible tumor suppressor. This chain is Villin-like protein, found in Mus musculus (Mouse).